The primary structure comprises 407 residues: ATP phosphoribosyltransferase regulatory subunit (407 aa).

The protein belongs to the class-II aminoacyl-tRNA synthetase family. HisZ subfamily. In terms of assembly, heteromultimer composed of HisG and HisZ subunits.

It localises to the cytoplasm. It functions in the pathway amino-acid biosynthesis; L-histidine biosynthesis; L-histidine from 5-phospho-alpha-D-ribose 1-diphosphate: step 1/9. Functionally, required for the first step of histidine biosynthesis. May allow the feedback regulation of ATP phosphoribosyltransferase activity by histidine. This is ATP phosphoribosyltransferase regulatory subunit from Rippkaea orientalis (strain PCC 8801 / RF-1) (Cyanothece sp. (strain PCC 8801)).